The chain runs to 610 residues: All-trans-retinol 13,14-reductase (610 aa).

The first 18 residues, 1–18 (MWLPLVLLLAVLLLAVLC), serve as a signal peptide directing secretion.

It belongs to the carotenoid/retinoid oxidoreductase family. CrtISO subfamily. It depends on NAD(+) as a cofactor. NADP(+) serves as cofactor. FAD is required as a cofactor. In terms of tissue distribution, expressed in liver; expression positively correlates with obesity and liver steatosis. Expressed in adipose tissue; expression tends to be decreased in obese versus lean individuals.

The protein localises to the endoplasmic reticulum membrane. The catalysed reaction is all-trans-13,14-dihydroretinol + A = all-trans-retinol + AH2. Its function is as follows. Catalyzes the saturation of all-trans-retinol to all-trans-13,14-dihydroretinol. Does not exhibit any activity toward all-trans-retinoic acid, nor 9-cis, 11-cis or 13-cis-retinol isomers. May play a role in the metabolism of vitamin A. Independently of retinol conversion, may regulate liver metabolism upstream of MLXIPL/ChREBP. May play a role in adipocyte differentiation. The protein is All-trans-retinol 13,14-reductase (RETSAT) of Homo sapiens (Human).